The following is a 401-amino-acid chain: S-adenosylmethionine synthase (401 aa).

136 to 141 (GQGSVD) is a binding site for ATP.

The protein belongs to the AdoMet synthase 2 family. The cofactor is Mg(2+).

The catalysed reaction is L-methionine + ATP + H2O = S-adenosyl-L-methionine + phosphate + diphosphate. It participates in amino-acid biosynthesis; S-adenosyl-L-methionine biosynthesis; S-adenosyl-L-methionine from L-methionine: step 1/1. Catalyzes the formation of S-adenosylmethionine from methionine and ATP. This is S-adenosylmethionine synthase (mat) from Pyrococcus horikoshii (strain ATCC 700860 / DSM 12428 / JCM 9974 / NBRC 100139 / OT-3).